The sequence spans 312 residues: Elongation factor Ts, mitochondrial (312 aa).

This sequence belongs to the EF-Ts family.

It localises to the mitochondrion. Its function is as follows. Associates with the EF-Tu.GDP complex and induces the exchange of GDP to GTP. It remains bound to the aminoacyl-tRNA.EF-Tu.GTP complex up to the GTP hydrolysis stage on the ribosome. This is Elongation factor Ts, mitochondrial (tsfm) from Xenopus laevis (African clawed frog).